Reading from the N-terminus, the 433-residue chain is Serine--tRNA ligase (433 aa).

235 to 237 contacts L-serine; it reads TSE. 266–268 is an ATP binding site; that stretch reads RSE. Position 289 (E289) interacts with L-serine. ATP is bound at residue 353 to 356; sequence EISS. L-serine is bound at residue S388.

Belongs to the class-II aminoacyl-tRNA synthetase family. Type-1 seryl-tRNA synthetase subfamily. Homodimer. The tRNA molecule binds across the dimer.

Its subcellular location is the cytoplasm. The enzyme catalyses tRNA(Ser) + L-serine + ATP = L-seryl-tRNA(Ser) + AMP + diphosphate + H(+). The catalysed reaction is tRNA(Sec) + L-serine + ATP = L-seryl-tRNA(Sec) + AMP + diphosphate + H(+). Its pathway is aminoacyl-tRNA biosynthesis; selenocysteinyl-tRNA(Sec) biosynthesis; L-seryl-tRNA(Sec) from L-serine and tRNA(Sec): step 1/1. Functionally, catalyzes the attachment of serine to tRNA(Ser). Is also able to aminoacylate tRNA(Sec) with serine, to form the misacylated tRNA L-seryl-tRNA(Sec), which will be further converted into selenocysteinyl-tRNA(Sec). This is Serine--tRNA ligase from Burkholderia vietnamiensis (strain G4 / LMG 22486) (Burkholderia cepacia (strain R1808)).